Reading from the N-terminus, the 384-residue chain is 5-amino-6-(D-ribitylamino)uracil--L-tyrosine 4-hydroxyphenyl transferase 2 (384 aa).

Residues 53 to 286 (VSYVVNRNIY…IAISRIILHT (234 aa)) enclose the Radical SAM core domain. Positions 67, 71, and 74 each coordinate [4Fe-4S] cluster.

The protein belongs to the radical SAM superfamily. CofH family. Consists of two subunits, CofG and CofH. Requires [4Fe-4S] cluster as cofactor.

It catalyses the reaction 5-amino-6-(D-ribitylamino)uracil + L-tyrosine + S-adenosyl-L-methionine = 5-amino-5-(4-hydroxybenzyl)-6-(D-ribitylimino)-5,6-dihydrouracil + 2-iminoacetate + 5'-deoxyadenosine + L-methionine + H(+). It participates in cofactor biosynthesis; coenzyme F0 biosynthesis. Its function is as follows. Catalyzes the radical-mediated synthesis of 5-amino-5-(4-hydroxybenzyl)-6-(D-ribitylimino)-5,6-dihydrouracil from 5-amino-6-(D-ribitylamino)uracil and L-tyrosine. The chain is 5-amino-6-(D-ribitylamino)uracil--L-tyrosine 4-hydroxyphenyl transferase 2 from Methanosarcina acetivorans (strain ATCC 35395 / DSM 2834 / JCM 12185 / C2A).